A 588-amino-acid polypeptide reads, in one-letter code: MNNSINHKFHHISRAEYQELLAVSRGDAVADYIIDNVSILDLINGGEISGPIVIKGRYIAGVGAEYADAPALQRIDARGATAVPGFIDAHLHIESSMMTPVTFETATLPRGLTTVICDPHEIVNVMGEAGFAWFARCAEQARQNQYLQVSSCVPALEGCDVNGASFTLEQMLAWRDHPQVTGLAEMMDYPGVISGQNALLDKLDAFRHLTLDGHCPGLGGKELNAYIAAGIENCHESYQLEEGRRKLQLGMSLMIREGSAARNLNALAPLINEFNSPQCMLCTDDRNPWEIAHEGHIDALIRRLIEQHNVPLHVAYRVASWSTARHFGLNHLGLLAPGKQADIVLLSDARKVTVQQVLVKGEPIDAQTLQAEESARLAQSAPPYGNTIDRQPVSASDFALQFTPGKRYRVIEVIHNELITHSRSSVYSENGFDRDDVCFIAVLERYGQRLAPACGLLGGFGLNEGALAATVSHDSHNIVVIGRSAEEMALAVNQVIQDGGGLCVVRNGQVQSHLPLPIAGLMSTDTAQSLAEQIDALKAAARECGPLPDEPFIQMAFLSLPVIPALKLTSQGLFDGEKFAFTTLEVTE.

Belongs to the metallo-dependent hydrolases superfamily. Adenine deaminase family. As to quaternary structure, homodimer. The cofactor is Mn(2+).

The catalysed reaction is adenine + H2O + H(+) = hypoxanthine + NH4(+). This chain is Adenine deaminase, found in Escherichia coli O81 (strain ED1a).